The chain runs to 178 residues: NAD(P)H-quinone oxidoreductase subunit 6, chloroplastic (178 aa).

5 helical membrane-spanning segments follow: residues 10–30 (FILV…VLFT), 32–52 (PIYS…FYIL), 61–81 (AQLL…VMFM), 94–114 (LWTI…FSLI), and 154–174 (FFLP…GAIA).

It belongs to the complex I subunit 6 family. In terms of assembly, NDH is composed of at least 16 different subunits, 5 of which are encoded in the nucleus.

The protein resides in the plastid. It localises to the chloroplast thylakoid membrane. It catalyses the reaction a plastoquinone + NADH + (n+1) H(+)(in) = a plastoquinol + NAD(+) + n H(+)(out). The enzyme catalyses a plastoquinone + NADPH + (n+1) H(+)(in) = a plastoquinol + NADP(+) + n H(+)(out). Functionally, NDH shuttles electrons from NAD(P)H:plastoquinone, via FMN and iron-sulfur (Fe-S) centers, to quinones in the photosynthetic chain and possibly in a chloroplast respiratory chain. The immediate electron acceptor for the enzyme in this species is believed to be plastoquinone. Couples the redox reaction to proton translocation, and thus conserves the redox energy in a proton gradient. This Citrus sinensis (Sweet orange) protein is NAD(P)H-quinone oxidoreductase subunit 6, chloroplastic (ndhG).